We begin with the raw amino-acid sequence, 241 residues long: Ubiquinone biosynthesis O-methyltransferase (241 aa).

Positions 42, 62, 83, and 127 each coordinate S-adenosyl-L-methionine.

It belongs to the methyltransferase superfamily. UbiG/COQ3 family.

It carries out the reaction a 3-demethylubiquinol + S-adenosyl-L-methionine = a ubiquinol + S-adenosyl-L-homocysteine + H(+). The catalysed reaction is a 3-(all-trans-polyprenyl)benzene-1,2-diol + S-adenosyl-L-methionine = a 2-methoxy-6-(all-trans-polyprenyl)phenol + S-adenosyl-L-homocysteine + H(+). It participates in cofactor biosynthesis; ubiquinone biosynthesis. In terms of biological role, O-methyltransferase that catalyzes the 2 O-methylation steps in the ubiquinone biosynthetic pathway. The sequence is that of Ubiquinone biosynthesis O-methyltransferase from Pectobacterium atrosepticum (strain SCRI 1043 / ATCC BAA-672) (Erwinia carotovora subsp. atroseptica).